A 488-amino-acid polypeptide reads, in one-letter code: 26S proteasome non-ATPase regulatory subunit 3 homolog A (488 aa).

Residues 240-421 (CRYLFYLGKI…GCMVSKETGD (182 aa)) enclose the PCI domain. The disordered stretch occupies residues 451–488 (RFPPNTHKEKESDEKRRERKQQEEELAKHMAEEDDDDF). The span at 456-481 (THKEKESDEKRRERKQQEEELAKHMA) shows a compositional bias: basic and acidic residues.

The protein belongs to the proteasome subunit S3 family. Component of the 19S regulatory particle (RP/PA700) lid subcomplex of the 26S proteasome. The 26S proteasome is composed of a core protease (CP), known as the 20S proteasome, capped at one or both ends by the 19S regulatory particle (RP/PA700). The RP/PA700 complex is composed of at least 17 different subunits in two subcomplexes, the base and the lid, which form the portions proximal and distal to the 20S proteolytic core, respectively. Interacts with UCH1 and UCH2. In terms of tissue distribution, ubiquitous with highest expression in flowers.

Functionally, acts as a regulatory subunit of the 26 proteasome which is involved in the ATP-dependent degradation of ubiquitinated proteins. In Arabidopsis thaliana (Mouse-ear cress), this protein is 26S proteasome non-ATPase regulatory subunit 3 homolog A.